A 363-amino-acid chain; its full sequence is Pyrimidine monooxygenase RutA (363 aa).

Residues 49–50 (IK), N115, E124, 140–141 (RY), and S190 each bind FMN.

This sequence belongs to the NtaA/SnaA/DszA monooxygenase family. RutA subfamily.

It catalyses the reaction uracil + FMNH2 + NADH + O2 = (Z)-3-ureidoacrylate + FMN + NAD(+) + H2O + H(+). It carries out the reaction thymine + FMNH2 + NADH + O2 = (Z)-2-methylureidoacrylate + FMN + NAD(+) + H2O + H(+). Its function is as follows. Catalyzes the pyrimidine ring opening between N-3 and C-4 by an unusual flavin hydroperoxide-catalyzed mechanism, adding oxygen atoms in the process to yield ureidoacrylate peracid, that immediately reacts with FMN forming ureidoacrylate and FMN-N(5)-oxide. The FMN-N(5)-oxide reacts spontaneously with NADH to produce FMN. Requires the flavin reductase RutF to regenerate FMN in vivo. This is Pyrimidine monooxygenase RutA from Escherichia coli (strain SMS-3-5 / SECEC).